Reading from the N-terminus, the 263-residue chain is Small ribosomal subunit protein eS4, Y isoform 1 (263 aa).

An S4 RNA-binding domain is found at 42–104 (LPLIVFLRNR…TGEHFRLVYD (63 aa)).

It belongs to the eukaryotic ribosomal protein eS4 family.

The chain is Small ribosomal subunit protein eS4, Y isoform 1 (RPS4Y1) from Homo sapiens (Human).